We begin with the raw amino-acid sequence, 40 residues long: Photosystem II reaction center protein J (40 aa).

Residues Ile8–Phe28 form a helical membrane-spanning segment.

Belongs to the PsbJ family. As to quaternary structure, PSII is composed of 1 copy each of membrane proteins PsbA, PsbB, PsbC, PsbD, PsbE, PsbF, PsbH, PsbI, PsbJ, PsbK, PsbL, PsbM, PsbT, PsbX, PsbY, PsbZ, Psb30/Ycf12, at least 3 peripheral proteins of the oxygen-evolving complex and a large number of cofactors. It forms dimeric complexes.

It is found in the plastid. The protein localises to the chloroplast thylakoid membrane. Functionally, one of the components of the core complex of photosystem II (PSII). PSII is a light-driven water:plastoquinone oxidoreductase that uses light energy to abstract electrons from H(2)O, generating O(2) and a proton gradient subsequently used for ATP formation. It consists of a core antenna complex that captures photons, and an electron transfer chain that converts photonic excitation into a charge separation. In Ipomoea purpurea (Common morning glory), this protein is Photosystem II reaction center protein J.